A 382-amino-acid chain; its full sequence is Queuine tRNA-ribosyltransferase (382 aa).

The active-site Proton acceptor is the Asp-93. Substrate is bound by residues 93–97, Asp-147, Gln-191, and Gly-218; that span reads DSGGF. Positions 249–255 are RNA binding; it reads GVGKPED. The Nucleophile role is filled by Asp-268. The interval 273 to 277 is RNA binding; important for wobble base 34 recognition; it reads TRNAR. Zn(2+) contacts are provided by Cys-306, Cys-308, Cys-311, and His-337.

Belongs to the queuine tRNA-ribosyltransferase family. Homodimer. Within each dimer, one monomer is responsible for RNA recognition and catalysis, while the other monomer binds to the replacement base PreQ1. It depends on Zn(2+) as a cofactor.

The enzyme catalyses 7-aminomethyl-7-carbaguanine + guanosine(34) in tRNA = 7-aminomethyl-7-carbaguanosine(34) in tRNA + guanine. Its pathway is tRNA modification; tRNA-queuosine biosynthesis. Catalyzes the base-exchange of a guanine (G) residue with the queuine precursor 7-aminomethyl-7-deazaguanine (PreQ1) at position 34 (anticodon wobble position) in tRNAs with GU(N) anticodons (tRNA-Asp, -Asn, -His and -Tyr). Catalysis occurs through a double-displacement mechanism. The nucleophile active site attacks the C1' of nucleotide 34 to detach the guanine base from the RNA, forming a covalent enzyme-RNA intermediate. The proton acceptor active site deprotonates the incoming PreQ1, allowing a nucleophilic attack on the C1' of the ribose to form the product. After dissociation, two additional enzymatic reactions on the tRNA convert PreQ1 to queuine (Q), resulting in the hypermodified nucleoside queuosine (7-(((4,5-cis-dihydroxy-2-cyclopenten-1-yl)amino)methyl)-7-deazaguanosine). This is Queuine tRNA-ribosyltransferase from Actinobacillus pleuropneumoniae serotype 5b (strain L20).